Reading from the N-terminus, the 270-residue chain is Putative phosphoenolpyruvate synthase regulatory protein (270 aa).

150-157 (GVSRCGKT) provides a ligand contact to ADP.

Belongs to the pyruvate, phosphate/water dikinase regulatory protein family. PSRP subfamily.

The enzyme catalyses [pyruvate, water dikinase] + ADP = [pyruvate, water dikinase]-phosphate + AMP + H(+). The catalysed reaction is [pyruvate, water dikinase]-phosphate + phosphate + H(+) = [pyruvate, water dikinase] + diphosphate. In terms of biological role, bifunctional serine/threonine kinase and phosphorylase involved in the regulation of the phosphoenolpyruvate synthase (PEPS) by catalyzing its phosphorylation/dephosphorylation. The chain is Putative phosphoenolpyruvate synthase regulatory protein from Shewanella loihica (strain ATCC BAA-1088 / PV-4).